Here is a 99-residue protein sequence, read N- to C-terminus: ATP-dependent Clp protease adapter protein ClpS (99 aa).

The protein belongs to the ClpS family. Binds to the N-terminal domain of the chaperone ClpA.

In terms of biological role, involved in the modulation of the specificity of the ClpAP-mediated ATP-dependent protein degradation. The sequence is that of ATP-dependent Clp protease adapter protein ClpS from Helicobacter hepaticus (strain ATCC 51449 / 3B1).